The following is a 746-amino-acid chain: Catalase-peroxidase (746 aa).

Over residues 1–20 (MSSDTSSSRPPQPDSGTASK) the composition is skewed to polar residues. The tract at residues 1-42 (MSSDTSSSRPPQPDSGTASKSESENPAIPSPKPKAHAPLTNR) is disordered. The segment at residues 113-236 (WHAAGTYRIH…YGATTMGLIY (124 aa)) is a cross-link (tryptophyl-tyrosyl-methioninium (Trp-Tyr) (with M-262)). Residue H114 is the Proton acceptor of the active site. A cross-link (tryptophyl-tyrosyl-methioninium (Tyr-Met) (with W-113)) is located at residues 236-262 (YVNPEGPEGKPDPIAAAIDIRETFGRM). Position 277 (H277) interacts with heme b.

Belongs to the peroxidase family. Peroxidase/catalase subfamily. Homodimer or homotetramer. It depends on heme b as a cofactor. Post-translationally, formation of the three residue Trp-Tyr-Met cross-link is important for the catalase, but not the peroxidase activity of the enzyme.

It carries out the reaction H2O2 + AH2 = A + 2 H2O. It catalyses the reaction 2 H2O2 = O2 + 2 H2O. Bifunctional enzyme with both catalase and broad-spectrum peroxidase activity. May play a role in the intracellular survival of mycobacteria. The sequence is that of Catalase-peroxidase from Mycobacterium intracellulare.